Consider the following 564-residue polypeptide: 4-hydroxy-7-methoxy-3-oxo-3,4-dihydro-2H-1,4-benzoxazin-2-yl glucoside beta-D-glucosidase 1d, chloroplastic (564 aa).

A chloroplast-targeting transit peptide spans 1–50; sequence MALLAAATLNPTTHLSLRSRAGRNSENLWLRSAASSQKSKGRFCNLTVRA. A beta-D-glucoside is bound by residues glutamine 92, histidine 194, and 239–240; that span reads NE. The Proton donor role is filled by glutamate 240. Cysteine 259 and cysteine 265 are oxidised to a cystine. Residues tyrosine 383, glutamate 456, tryptophan 504, 511–512, and phenylalanine 520 contribute to the a beta-D-glucoside site; that span reads EW. Residue glutamate 456 is the Nucleophile of the active site.

The protein belongs to the glycosyl hydrolase 1 family. In terms of assembly, homo- and heterohexamers. Expressed in young seedlings early after germination.

It localises to the plastid. Its subcellular location is the chloroplast. The catalysed reaction is Hydrolysis of terminal, non-reducing beta-D-glucosyl residues with release of beta-D-glucose.. The enzyme catalyses DIMBOA beta-D-glucoside + H2O = DIMBOA + D-glucose. It carries out the reaction DIBOA beta-D-glucoside + H2O = DIBOA + D-glucose. Functionally, acts in defense of young plant parts against pests via the production of hydroxamic acids from hydroxamic acid glucosides. Enzymatic activity is highly correlated with plant growth. The preferred substrate is DIMBOA-beta-D-glucoside. In Triticum aestivum (Wheat), this protein is 4-hydroxy-7-methoxy-3-oxo-3,4-dihydro-2H-1,4-benzoxazin-2-yl glucoside beta-D-glucosidase 1d, chloroplastic (GLU1D).